The sequence spans 165 residues: MSSSVSSKTRYWVLALAAIVLDQWSKWAVLSSFQYRERVNVIPSFFDLTLVYNPGAAFSFLADQGGWQKYFFLVLAVAVSAYLVRAILRDEFATLGKTGAAMIIGGALGNVIDRLIHGHVVDFLLFYWQNWFYPAFNIADSFICVGAVLAVLDNIVHRKTQEEKY.

4 helical membrane-spanning segments follow: residues 11-31 (YWVL…AVLS), 41-61 (VIPS…FSFL), 64-84 (QGGW…AYLV), and 92-112 (FATL…GNVI). Catalysis depends on residues Asp122 and Asp140. Residues 132-152 (FYPAFNIADSFICVGAVLAVL) traverse the membrane as a helical segment.

The protein belongs to the peptidase A8 family.

Its subcellular location is the cell inner membrane. It carries out the reaction Release of signal peptides from bacterial membrane prolipoproteins. Hydrolyzes -Xaa-Yaa-Zaa-|-(S,diacylglyceryl)Cys-, in which Xaa is hydrophobic (preferably Leu), and Yaa (Ala or Ser) and Zaa (Gly or Ala) have small, neutral side chains.. Its pathway is protein modification; lipoprotein biosynthesis (signal peptide cleavage). In terms of biological role, this protein specifically catalyzes the removal of signal peptides from prolipoproteins. This is Lipoprotein signal peptidase from Neisseria meningitidis serogroup A / serotype 4A (strain DSM 15465 / Z2491).